A 364-amino-acid polypeptide reads, in one-letter code: DNA replication and repair protein RecF (364 aa).

Residue 30–37 (GNNGQGKT) participates in ATP binding.

Belongs to the RecF family.

It is found in the cytoplasm. Functionally, the RecF protein is involved in DNA metabolism; it is required for DNA replication and normal SOS inducibility. RecF binds preferentially to single-stranded, linear DNA. It also seems to bind ATP. The chain is DNA replication and repair protein RecF from Geotalea daltonii (strain DSM 22248 / JCM 15807 / FRC-32) (Geobacter daltonii).